The sequence spans 254 residues: Imidazole glycerol phosphate synthase subunit HisF (254 aa).

Active-site residues include D11 and D130.

The protein belongs to the HisA/HisF family. Heterodimer of HisH and HisF.

Its subcellular location is the cytoplasm. The enzyme catalyses 5-[(5-phospho-1-deoxy-D-ribulos-1-ylimino)methylamino]-1-(5-phospho-beta-D-ribosyl)imidazole-4-carboxamide + L-glutamine = D-erythro-1-(imidazol-4-yl)glycerol 3-phosphate + 5-amino-1-(5-phospho-beta-D-ribosyl)imidazole-4-carboxamide + L-glutamate + H(+). It functions in the pathway amino-acid biosynthesis; L-histidine biosynthesis; L-histidine from 5-phospho-alpha-D-ribose 1-diphosphate: step 5/9. Functionally, IGPS catalyzes the conversion of PRFAR and glutamine to IGP, AICAR and glutamate. The HisF subunit catalyzes the cyclization activity that produces IGP and AICAR from PRFAR using the ammonia provided by the HisH subunit. This chain is Imidazole glycerol phosphate synthase subunit HisF, found in Staphylococcus carnosus (strain TM300).